Consider the following 89-residue polypeptide: MALSASEKAQIVKDFQQGDGDTGSPEVQVALLSANINKLQDHFKANKQDHHSRRGLIRMVNQRRKLLDYLKRKNADRYLELIQRLGLRR.

Belongs to the universal ribosomal protein uS15 family. In terms of assembly, part of the 30S ribosomal subunit. Forms a bridge to the 50S subunit in the 70S ribosome, contacting the 23S rRNA.

One of the primary rRNA binding proteins, it binds directly to 16S rRNA where it helps nucleate assembly of the platform of the 30S subunit by binding and bridging several RNA helices of the 16S rRNA. Functionally, forms an intersubunit bridge (bridge B4) with the 23S rRNA of the 50S subunit in the ribosome. This Marinobacter nauticus (strain ATCC 700491 / DSM 11845 / VT8) (Marinobacter aquaeolei) protein is Small ribosomal subunit protein uS15.